The sequence spans 173 residues: MQSIVLILILQLVYVPFLTLRTIFLVKNITFLAAIFGMLEMLVYVFGLSLVFSGKQSMLAMVVYAVGFGLGIFLGAKIERKLAIGYVYTTINTQNKNEELVRFLRNEGFAVTIYVGEGRDSNRYKYEILTKRNRETELFQIVEQFEPNAFIISYEPKSFKGGFLLARMKAKQK.

The next 3 helical transmembrane spans lie at 4–24 (IVLI…RTIF), 31–51 (FLAA…LSLV), and 58–78 (MLAM…GAKI).

It belongs to the UPF0316 family.

The protein localises to the cell membrane. This Lysinibacillus sphaericus (strain C3-41) protein is UPF0316 protein Bsph_0745.